A 353-amino-acid polypeptide reads, in one-letter code: Photosystem II protein D1 (353 aa).

At Thr-2 the chain carries N-acetylthreonine. Thr-2 is subject to Phosphothreonine. Helical transmembrane passes span 29–46 (YIGWFGVLMIPTLLTATS), 118–133 (HFLLGVACYMGREWEL), and 142–156 (WIAVAYSAPVAAATA). Chlorophyll a is bound at residue His-118. Tyr-126 provides a ligand contact to pheophytin a. 2 residues coordinate [CaMn4O5] cluster: Asp-170 and Glu-189. Residues 197–218 (FHMLGVAGVFGGSLFSAMHGSL) traverse the membrane as a helical segment. His-198 is a chlorophyll a binding site. A quinone is bound by residues His-215 and 264–265 (SF). Residue His-215 participates in Fe cation binding. Position 272 (His-272) interacts with Fe cation. The chain crosses the membrane as a helical span at residues 274 to 288 (FLAAWPVVGIWFTAL). 4 residues coordinate [CaMn4O5] cluster: His-332, Glu-333, Asp-342, and Ala-344. Residues 345–353 (ALEVPSING) constitute a propeptide that is removed on maturation.

Belongs to the reaction center PufL/M/PsbA/D family. In terms of assembly, PSII is composed of 1 copy each of membrane proteins PsbA, PsbB, PsbC, PsbD, PsbE, PsbF, PsbH, PsbI, PsbJ, PsbK, PsbL, PsbM, PsbT, PsbX, PsbY, PsbZ, Psb30/Ycf12, at least 3 peripheral proteins of the oxygen-evolving complex and a large number of cofactors. It forms dimeric complexes. The D1/D2 heterodimer binds P680, chlorophylls that are the primary electron donor of PSII, and subsequent electron acceptors. It shares a non-heme iron and each subunit binds pheophytin, quinone, additional chlorophylls, carotenoids and lipids. D1 provides most of the ligands for the Mn4-Ca-O5 cluster of the oxygen-evolving complex (OEC). There is also a Cl(-1) ion associated with D1 and D2, which is required for oxygen evolution. The PSII complex binds additional chlorophylls, carotenoids and specific lipids. serves as cofactor. Post-translationally, tyr-161 forms a radical intermediate that is referred to as redox-active TyrZ, YZ or Y-Z. In terms of processing, C-terminally processed by CTPA; processing is essential to allow assembly of the oxygen-evolving complex and thus photosynthetic growth.

The protein localises to the plastid. It is found in the chloroplast thylakoid membrane. It catalyses the reaction 2 a plastoquinone + 4 hnu + 2 H2O = 2 a plastoquinol + O2. Photosystem II (PSII) is a light-driven water:plastoquinone oxidoreductase that uses light energy to abstract electrons from H(2)O, generating O(2) and a proton gradient subsequently used for ATP formation. It consists of a core antenna complex that captures photons, and an electron transfer chain that converts photonic excitation into a charge separation. The D1/D2 (PsbA/PsbD) reaction center heterodimer binds P680, the primary electron donor of PSII as well as several subsequent electron acceptors. This chain is Photosystem II protein D1, found in Agrostis stolonifera (Creeping bentgrass).